A 320-amino-acid chain; its full sequence is Probable cell division protein WhiA (320 aa).

The segment at residues 276 to 310 (TLKELGELVSGGKISKSGINHRLRKIDEIAERLRA) is a DNA-binding region (H-T-H motif).

It belongs to the WhiA family.

Its function is as follows. Involved in cell division and chromosome segregation. This is Probable cell division protein WhiA from Geobacillus sp. (strain WCH70).